The following is a 523-amino-acid chain: Succinate-semialdehyde dehydrogenase, mitochondrial (523 aa).

The N-terminal 35 residues, 1–35 (MATCFLLRSFWAARPALPPPGRFRPEPAGTPRRSY), are a transit peptide targeting the mitochondrion. N6-acetyllysine is present on Lys74. N6-acetyllysine; alternate is present on Lys114. Lys114 carries the post-translational modification N6-succinyllysine; alternate. N6-succinyllysine is present on Lys123. Lys128 carries the N6-acetyllysine modification. The residue at position 172 (Lys172) is an N6-succinyllysine. NAD(+)-binding positions include Arg201 and 216 to 219 (KPAE). Position 201 (Arg201) interacts with substrate. At Lys253 the chain carries N6-acetyllysine; alternate. Lys253 bears the N6-succinyllysine; alternate mark. 272–277 (GSTATG) serves as a coordination point for NAD(+). The active-site Proton acceptor is the Glu294. Residue Arg322 coordinates substrate. Cys328 serves as the catalytic Nucleophile. Cys328 and Cys330 form a disulfide bridge. Lys347 carries the post-translational modification N6-acetyllysine; alternate. At Lys347 the chain carries N6-succinyllysine; alternate. Lys353 carries the post-translational modification N6-acetyllysine. An N6-succinyllysine modification is found at Lys390. Lys399 carries the N6-acetyllysine modification. Ser403 is modified (phosphoserine). Ser486 lines the substrate pocket. Phosphoserine is present on Ser487.

This sequence belongs to the aldehyde dehydrogenase family. Homotetramer.

The protein resides in the mitochondrion. The catalysed reaction is succinate semialdehyde + NAD(+) + H2O = succinate + NADH + 2 H(+). Its pathway is amino-acid degradation; 4-aminobutanoate degradation. Redox-regulated. Inhibited under oxydizing conditions. In terms of biological role, catalyzes one step in the degradation of the inhibitory neurotransmitter gamma-aminobutyric acid (GABA). The polypeptide is Succinate-semialdehyde dehydrogenase, mitochondrial (Aldh5a1) (Mus musculus (Mouse)).